Consider the following 293-residue polypeptide: Phosphate import ATP-binding protein PstB (293 aa).

Positions 46-288 constitute an ABC transporter domain; that stretch reads FGIRGVDVFY…PDHELTEAYI (243 aa). 78–85 lines the ATP pocket; it reads GPSGCGKS.

The protein belongs to the ABC transporter superfamily. Phosphate importer (TC 3.A.1.7) family. The complex is composed of two ATP-binding proteins (PstB), two transmembrane proteins (PstC and PstA) and a solute-binding protein (PstS).

Its subcellular location is the cell inner membrane. It catalyses the reaction phosphate(out) + ATP + H2O = ADP + 2 phosphate(in) + H(+). In terms of biological role, part of the ABC transporter complex PstSACB involved in phosphate import. Responsible for energy coupling to the transport system. The chain is Phosphate import ATP-binding protein PstB from Saccharophagus degradans (strain 2-40 / ATCC 43961 / DSM 17024).